A 180-amino-acid chain; its full sequence is MKDSPQVTVLRLGHRPGRDERMTTHVGLTARALGADKVVLANAARNQADTVIDITDRFGGPFDVASTEEPKRLIRDFEGRVVHLTMYGEPVQEVEADVREANTAEPLLVVVGAEKVPFEVYEHADWNVGVTNQPHSEVASLAVFLDRLFEGRELDREWENPDRVVVPQETGKRVVDPDEE.

S-adenosyl-L-methionine contacts are provided by residues Leu84 and 112–116; that span reads GAEKV.

The protein belongs to the aTrm56 family. In terms of assembly, homodimer.

The protein localises to the cytoplasm. The enzyme catalyses cytidine(56) in tRNA + S-adenosyl-L-methionine = 2'-O-methylcytidine(56) in tRNA + S-adenosyl-L-homocysteine + H(+). Its function is as follows. Specifically catalyzes the AdoMet-dependent 2'-O-ribose methylation of cytidine at position 56 in tRNAs. This is tRNA (cytidine(56)-2'-O)-methyltransferase from Haloarcula marismortui (strain ATCC 43049 / DSM 3752 / JCM 8966 / VKM B-1809) (Halobacterium marismortui).